The following is a 275-amino-acid chain: Activator of basal transcription 1 (275 aa).

Residue Met-1 is modified to N-acetylmethionine. Composition is skewed to acidic residues over residues 1–10 and 25–34; these read MEVEGLELDT and AEEEQEESED. A disordered region spans residues 1–39; it reads MEVEGLELDTAELGPLEGSHQKLEAEEEQEESEDAAGGS. One can recognise an RRM domain in the interval 46–145; that stretch reads GIVYLGHIPP…RRRSPFRYDL (100 aa). A coiled-coil region spans residues 164–194; it reads AFERQVRRQRLRAEVAQAKRETDFYLRSVER. The tract at residues 200–275 is disordered; it reads AADGDSTRPN…RGNSSPARNS (76 aa). Polar residues predominate over residues 262 to 275; that stretch reads PSESRGNSSPARNS.

Belongs to the ESF2/ABP1 family. Interacts with ESF1/ABTAP. Interacts with IGHMBP2.

It localises to the nucleus. Its subcellular location is the nucleolus. Could be a novel TATA-binding protein (TBP) which can function as a basal transcription activator. Can act as a regulator of basal transcription for class II genes. The protein is Activator of basal transcription 1 (ABT1) of Bos taurus (Bovine).